Here is a 328-residue protein sequence, read N- to C-terminus: Malate dehydrogenase (328 aa).

11–17 (GAAGQIG) contacts NAD(+). Substrate-binding residues include arginine 92 and arginine 98. NAD(+) is bound by residues asparagine 105, glutamine 112, and 129–131 (VGN). Asparagine 131 and arginine 162 together coordinate substrate. Residue histidine 187 is the Proton acceptor of the active site.

This sequence belongs to the LDH/MDH superfamily. MDH type 2 family.

It catalyses the reaction (S)-malate + NAD(+) = oxaloacetate + NADH + H(+). Its function is as follows. Catalyzes the reversible oxidation of malate to oxaloacetate. In Coxiella burnetii (strain CbuG_Q212) (Coxiella burnetii (strain Q212)), this protein is Malate dehydrogenase.